The primary structure comprises 94 residues: Co-chaperonin GroES (94 aa).

This sequence belongs to the GroES chaperonin family. In terms of assembly, heptamer of 7 subunits arranged in a ring. Interacts with the chaperonin GroEL.

It localises to the cytoplasm. In terms of biological role, together with the chaperonin GroEL, plays an essential role in assisting protein folding. The GroEL-GroES system forms a nano-cage that allows encapsulation of the non-native substrate proteins and provides a physical environment optimized to promote and accelerate protein folding. GroES binds to the apical surface of the GroEL ring, thereby capping the opening of the GroEL channel. This is Co-chaperonin GroES from Acetivibrio thermocellus (strain ATCC 27405 / DSM 1237 / JCM 9322 / NBRC 103400 / NCIMB 10682 / NRRL B-4536 / VPI 7372) (Clostridium thermocellum).